The chain runs to 2002 residues: Methylcytosine dioxygenase TET2 (2002 aa).

A compositionally biased stretch (basic and acidic residues) spans 1 to 11 (MEQDRTNHVEG). Residues 1–22 (MEQDRTNHVEGNRLSPFLIPSP) form a disordered region. A phosphoserine mark is found at Ser15, Ser75, and Ser99. Positions 113 to 124 (KQDQKANGERRN) are enriched in basic and acidic residues. Disordered stretches follow at residues 113–154 (KQDQ…VSSV), 266–287 (HPSH…LPPK), 349–368 (GEEF…GSSE), 390–488 (DSFS…VNRN), 703–748 (LNQQ…QQKL), 930–949 (VPDQ…TQKH), and 1075–1095 (DSHT…PTKR). Composition is skewed to polar residues over residues 126–143 (GVSQ…NVSD) and 267–283 (PSHT…SNSE). Over residues 397–416 (TPPPPSQLLLSPPPPLPQVP) the composition is skewed to pro residues. Composition is skewed to polar residues over residues 479 to 488 (RPQNNCVNRN) and 703 to 718 (LNQQ…NSHL). A compositionally biased stretch (low complexity) spans 731 to 748 (QPSQSSHLPQNQQQQQKL). Composition is skewed to polar residues over residues 935–944 (GSHTQTPPQK) and 1081–1095 (LEQQ…PTKR). Phosphoserine occurs at positions 1107 and 1109. Positions 1133, 1135, 1193, 1219, and 1221 each coordinate Zn(2+). Arg1261 provides a ligand contact to 2-oxoglutarate. Positions 1271, 1273, 1289, and 1298 each coordinate Zn(2+). The interval 1290 to 1303 (SWSMYYNGCKFARS) is interaction with DNA. A Glycyl lysine isopeptide (Lys-Gly) (interchain with G-Cter in ubiquitin) cross-link involves residue Lys1299. Cys1358 is a Zn(2+) binding site. Cys1374 serves as a coordination point for 2-oxoglutarate. His1380 is a Zn(2+) binding site. Residues His1382 and Asp1384 each contribute to the Fe cation site. Asn1387 lines the substrate pocket. 2-oxoglutarate is bound at residue His1416. 2 disordered regions span residues 1475–1507 (AAEK…NASQ) and 1521–1587 (VMQQ…HTSD). Over residues 1477–1487 (EKLSSLENSSN) the composition is skewed to low complexity. Over residues 1496-1507 (PSRTKQTENASQ) the composition is skewed to polar residues. 2 stretches are compositionally biased toward low complexity: residues 1523–1532 (QQSQQPQPLQ) and 1539–1551 (QQQQ…QPHH). Over residues 1554-1568 (TESVNSYSASGSTNP) the composition is skewed to polar residues. The residue at position 1682 (Arg1682) is an Asymmetric dimethylarginine. His1881 is a Fe cation binding site. A 2-oxoglutarate-binding site is contributed by 1896-1898 (RIS). Substrate is bound at residue 1902–1904 (YQH). His1912 is a Zn(2+) binding site. Residues 1932 to 1961 (CEKYGPDYVPQKSHGKKVKREPAEPHETSE) form a disordered region. Positions 1951–1960 (REPAEPHETS) are enriched in basic and acidic residues.

It belongs to the TET family. Interacts with HCFC1. Interacts with OGT. Interacts with PROSER1; this interaction mediates TET2 O-GlcNAcylation and stability by promoting the interaction between OGT and TET2. Directly interacts (via C-terminus) with the DCAF1 component of the CRL4(VprBP) E3 ubiquitin-protein ligase complex. The cofactor is Fe(2+). It depends on Zn(2+) as a cofactor. May be glycosylated. It is unclear whether interaction with OGT leads to GlcNAcylation. According to a report, it is not GlcNAcylated by OGT. In contrast, another group reports GlcNAcylation by OGT in mouse ortholog. In terms of processing, monoubiquitinated at Lys-1299 by the DCX (DDB1-CUL4-X-box) E3 ubiquitin-protein ligase complex called CRL4(VprBP) or CUL4A-RBX1-DDB1-DCAF1/VPRBP complex; this modification promotes binding to DNA. Post-translationally, acetylated. Deacetylase HDAC6 acts as a valine sensor by binding to valine through its primate-specific SE14 repeat region and deacetylates TET2 following valine deprivation which promotes TET2-dependent DNA demethylation. In terms of tissue distribution, broadly expressed. Highly expressed in hematopoietic cells; highest expression observed in granulocytes. Expression is reduced in granulocytes from peripheral blood of patients affected by myelodysplastic syndromes.

The protein localises to the nucleus. The protein resides in the chromosome. It catalyses the reaction a 5-methyl-2'-deoxycytidine in DNA + 2-oxoglutarate + O2 = a 5-hydroxymethyl-2'-deoxycytidine in DNA + succinate + CO2. The enzyme catalyses a 5-hydroxymethyl-2'-deoxycytidine in DNA + 2-oxoglutarate + O2 = a 5-formyl-2'-deoxycytidine in DNA + succinate + CO2 + H2O. It carries out the reaction a 5-formyl-2'-deoxycytidine in DNA + 2-oxoglutarate + O2 = a 5-carboxyl-2'-deoxycytidine in DNA + succinate + CO2 + H(+). In terms of biological role, dioxygenase that catalyzes the conversion of the modified genomic base 5-methylcytosine (5mC) into 5-hydroxymethylcytosine (5hmC) and plays a key role in active DNA demethylation. Has a preference for 5-hydroxymethylcytosine in CpG motifs. Also mediates subsequent conversion of 5hmC into 5-formylcytosine (5fC), and conversion of 5fC to 5-carboxylcytosine (5caC). Conversion of 5mC into 5hmC, 5fC and 5caC probably constitutes the first step in cytosine demethylation. Methylation at the C5 position of cytosine bases is an epigenetic modification of the mammalian genome which plays an important role in transcriptional regulation. In addition to its role in DNA demethylation, also involved in the recruitment of the O-GlcNAc transferase OGT to CpG-rich transcription start sites of active genes, thereby promoting histone H2B GlcNAcylation by OGT. This Homo sapiens (Human) protein is Methylcytosine dioxygenase TET2 (TET2).